The sequence spans 267 residues: 3-methyl-2-oxobutanoate hydroxymethyltransferase (267 aa).

Positions 45 and 84 each coordinate Mg(2+). Residues 45 to 46 (DS), Asp-84, and Lys-113 each bind 3-methyl-2-oxobutanoate. Glu-115 is a Mg(2+) binding site. The active-site Proton acceptor is Glu-182.

This sequence belongs to the PanB family. As to quaternary structure, homodecamer; pentamer of dimers. Mg(2+) is required as a cofactor.

It is found in the cytoplasm. The enzyme catalyses 3-methyl-2-oxobutanoate + (6R)-5,10-methylene-5,6,7,8-tetrahydrofolate + H2O = 2-dehydropantoate + (6S)-5,6,7,8-tetrahydrofolate. The protein operates within cofactor biosynthesis; coenzyme A biosynthesis. Catalyzes the reversible reaction in which hydroxymethyl group from 5,10-methylenetetrahydrofolate is transferred onto alpha-ketoisovalerate to form ketopantoate. This is 3-methyl-2-oxobutanoate hydroxymethyltransferase from Saccharolobus islandicus (strain L.S.2.15 / Lassen #1) (Sulfolobus islandicus).